Consider the following 119-residue polypeptide: Beta-2-microglobulin (119 aa).

The first 20 residues, 1-20 (MARSVVVALLVLLSLSGLEA), serve as a signal peptide directing secretion. Positions 25 to 114 (PKIQVYSRHP…VTFSTPKTVK (90 aa)) constitute an Ig-like C1-type domain. The cysteines at positions 45 and 100 are disulfide-linked.

It belongs to the beta-2-microglobulin family. In terms of assembly, heterodimer of an alpha chain and a beta chain. Beta-2-microglobulin is the beta-chain of major histocompatibility complex class I molecules.

It localises to the secreted. Its function is as follows. Component of the class I major histocompatibility complex (MHC). Involved in the presentation of peptide antigens to the immune system. This is Beta-2-microglobulin (B2M) from Ateles paniscus (Black spider monkey).